Here is a 301-residue protein sequence, read N- to C-terminus: Pseudouridine-5'-phosphate glycosidase (301 aa).

Catalysis depends on Glu-25, which acts as the Proton donor. 2 residues coordinate substrate: Lys-86 and Val-106. Position 138 (Asp-138) interacts with Mn(2+). Position 140–142 (140–142 (SAD)) interacts with substrate. Residue Lys-159 is the Nucleophile of the active site.

Belongs to the pseudouridine-5'-phosphate glycosidase family. In terms of assembly, homotrimer. It depends on Mn(2+) as a cofactor.

The catalysed reaction is D-ribose 5-phosphate + uracil = psi-UMP + H2O. Catalyzes the reversible cleavage of pseudouridine 5'-phosphate (PsiMP) to ribose 5-phosphate and uracil. Functions biologically in the cleavage direction, as part of a pseudouridine degradation pathway. The sequence is that of Pseudouridine-5'-phosphate glycosidase from Geobacillus kaustophilus (strain HTA426).